A 311-amino-acid chain; its full sequence is Aspartate carbamoyltransferase catalytic subunit (311 aa).

Positions 55 and 56 each coordinate carbamoyl phosphate. Lysine 85 lines the L-aspartate pocket. Residues arginine 106, histidine 135, and glutamine 138 each coordinate carbamoyl phosphate. Residues arginine 168 and arginine 230 each coordinate L-aspartate. Residues leucine 268 and proline 269 each coordinate carbamoyl phosphate.

It belongs to the aspartate/ornithine carbamoyltransferase superfamily. ATCase family. Heterododecamer (2C3:3R2) of six catalytic PyrB chains organized as two trimers (C3), and six regulatory PyrI chains organized as three dimers (R2).

It carries out the reaction carbamoyl phosphate + L-aspartate = N-carbamoyl-L-aspartate + phosphate + H(+). It functions in the pathway pyrimidine metabolism; UMP biosynthesis via de novo pathway; (S)-dihydroorotate from bicarbonate: step 2/3. In terms of biological role, catalyzes the condensation of carbamoyl phosphate and aspartate to form carbamoyl aspartate and inorganic phosphate, the committed step in the de novo pyrimidine nucleotide biosynthesis pathway. This is Aspartate carbamoyltransferase catalytic subunit from Cronobacter sakazakii (strain ATCC BAA-894) (Enterobacter sakazakii).